The primary structure comprises 1239 residues: Inner tegument protein (1239 aa).

Positions 1 to 10 are enriched in low complexity; sequence MASAMESDSS. Disordered stretches follow at residues 1–20, 672–708, and 1090–1239; these read MASAMESDSSGGSGGADAQP, GESPQAVGLRPLNLEGEGKAGDAGAEGAEDEEGGGPW, and GRNA…AEDE. The tract at residues 618-1239 is interaction with large tegument protein; that stretch reads NELPKTRSLA…RPPRPTAEDE (622 aa). Residues 1115–1126 show a composition bias toward low complexity; sequence DSSPFSFSSSDF. Over residues 1127 to 1136 the composition is skewed to acidic residues; that stretch reads SDQDEGEGGE. Low complexity predominate over residues 1181-1190; that stretch reads RTTPSPSRRA. Residues 1219-1232 show a composition bias toward basic residues; that stretch reads VRPRTRRGATRRPP.

It belongs to the herpesviridae inner tegument protein family. Interacts (via C-terminus) with the large tegument protein/LTP (via N-terminus).

It is found in the virion tegument. It localises to the host cytoplasm. The protein resides in the host nucleus. Its subcellular location is the host Golgi apparatus. The protein localises to the host trans-Golgi network. Functionally, plays an essential role in cytoplasmic secondary envelopment during viral egress. Interacts with the capsid via the large tegument protein/LTP and participates in its transport to the host trans-Golgi network (TGN) where secondary envelopment occurs. Modulates tegumentation and capsid accumulation at the viral assembly complex. In Homo sapiens (Human), this protein is Inner tegument protein.